The primary structure comprises 468 residues: Spliceosome-associated protein CWC27 homolog (468 aa).

Position 2 is an N-acetylserine (Ser-2). Positions 11-166 (TNGKVLLKTT…NPHRIKSCEV (156 aa)) constitute a PPIase cyclophilin-type domain. 2 disordered regions span residues 204 to 382 (LLSF…EDQT) and 427 to 468 (RKVK…KERR). Positions 206 to 229 (SFGEEAEEEEEEVNRVSQSMKGRS) form a coiled coil. Positions 231 to 241 (SSHDLLKDDPH) are enriched in basic and acidic residues. The span at 256–268 (TGDLEDDAEDDSV) shows a compositional bias: acidic residues. Basic and acidic residues-rich tracts occupy residues 269 to 287 (EHDG…ERIA) and 302 to 342 (GDGE…AEKG). Phosphoserine is present on Ser-273. A coiled-coil region spans residues 309–342 (ASRSEELRKEARQLKRELLAAKQKKESATKAEKG). Ser-343 bears the Phosphoserine mark. 2 stretches are compositionally biased toward basic and acidic residues: residues 356–368 (EYRR…EALR) and 453–468 (RREE…KERR).

The protein belongs to the cyclophilin-type PPIase family. As to quaternary structure, part of the activated spliceosome B/catalytic step 1 spliceosome, one of the forms of the spliceosome which has a well-formed active site but still cannot catalyze the branching reaction and is composed at least of 52 proteins, the U2, U5 and U6 snRNAs and the pre-mRNA. Recruited during early steps of activated spliceosome B maturation, it is probably one of the first proteins released from this complex as he matures to the spliceosome C complex. Component of the minor spliceosome, which splices U12-type introns.

It localises to the nucleus. In terms of biological role, as part of the spliceosome, plays a role in pre-mRNA splicing. Probable inactive PPIase with no peptidyl-prolyl cis-trans isomerase activity. As a component of the minor spliceosome, involved in the splicing of U12-type introns in pre-mRNAs. In Rattus norvegicus (Rat), this protein is Spliceosome-associated protein CWC27 homolog.